Consider the following 659-residue polypeptide: DNA ligase (659 aa).

NAD(+)-binding positions include 31–35 (DFVYD), 80–81 (SL), and E109. The N6-AMP-lysine intermediate role is filled by K111. Positions 132, 166, 281, and 305 each coordinate NAD(+). The Zn(2+) site is built by C398, C401, C416, and C421. The BRCT domain occupies 581–659 (VTTHPFNGKT…EATFKVKINE (79 aa)).

The protein belongs to the NAD-dependent DNA ligase family. LigA subfamily. The cofactor is Mg(2+). Mn(2+) serves as cofactor.

The catalysed reaction is NAD(+) + (deoxyribonucleotide)n-3'-hydroxyl + 5'-phospho-(deoxyribonucleotide)m = (deoxyribonucleotide)n+m + AMP + beta-nicotinamide D-nucleotide.. Functionally, DNA ligase that catalyzes the formation of phosphodiester linkages between 5'-phosphoryl and 3'-hydroxyl groups in double-stranded DNA using NAD as a coenzyme and as the energy source for the reaction. It is essential for DNA replication and repair of damaged DNA. This is DNA ligase from Acholeplasma laidlawii (strain PG-8A).